A 160-amino-acid polypeptide reads, in one-letter code: Urease accessory protein UreE (160 aa).

Belongs to the UreE family.

The protein localises to the cytoplasm. Involved in urease metallocenter assembly. Binds nickel. Probably functions as a nickel donor during metallocenter assembly. This chain is Urease accessory protein UreE, found in Acinetobacter baumannii (strain ACICU).